An 88-amino-acid chain; its full sequence is Small ribosomal subunit protein uS17 (88 aa).

The protein belongs to the universal ribosomal protein uS17 family. In terms of assembly, part of the 30S ribosomal subunit.

One of the primary rRNA binding proteins, it binds specifically to the 5'-end of 16S ribosomal RNA. The sequence is that of Small ribosomal subunit protein uS17 from Leuconostoc mesenteroides subsp. mesenteroides (strain ATCC 8293 / DSM 20343 / BCRC 11652 / CCM 1803 / JCM 6124 / NCDO 523 / NBRC 100496 / NCIMB 8023 / NCTC 12954 / NRRL B-1118 / 37Y).